Reading from the N-terminus, the 107-residue chain is Iron-binding protein IscA (107 aa).

The Fe cation site is built by Cys35, Cys99, and Cys101.

This sequence belongs to the HesB/IscA family. In terms of assembly, homodimer; may form tetramers and higher multimers. Requires Fe cation as cofactor.

Functionally, is able to transfer iron-sulfur clusters to apo-ferredoxin. Multiple cycles of [2Fe2S] cluster formation and transfer are observed, suggesting that IscA acts catalytically. Recruits intracellular free iron so as to provide iron for the assembly of transient iron-sulfur cluster in IscU in the presence of IscS, L-cysteine and the thioredoxin reductase system TrxA/TrxB. The chain is Iron-binding protein IscA from Pectobacterium carotovorum subsp. carotovorum (strain PC1).